We begin with the raw amino-acid sequence, 177 residues long: Large ribosomal subunit protein uL6 (177 aa).

It belongs to the universal ribosomal protein uL6 family. In terms of assembly, part of the 50S ribosomal subunit.

Its function is as follows. This protein binds to the 23S rRNA, and is important in its secondary structure. It is located near the subunit interface in the base of the L7/L12 stalk, and near the tRNA binding site of the peptidyltransferase center. In Tolumonas auensis (strain DSM 9187 / NBRC 110442 / TA 4), this protein is Large ribosomal subunit protein uL6.